Reading from the N-terminus, the 875-residue chain is Alanine--tRNA ligase (875 aa).

His-596, His-600, Cys-700, and His-704 together coordinate Zn(2+).

Belongs to the class-II aminoacyl-tRNA synthetase family. Zn(2+) serves as cofactor.

The protein localises to the cytoplasm. It carries out the reaction tRNA(Ala) + L-alanine + ATP = L-alanyl-tRNA(Ala) + AMP + diphosphate. In terms of biological role, catalyzes the attachment of alanine to tRNA(Ala) in a two-step reaction: alanine is first activated by ATP to form Ala-AMP and then transferred to the acceptor end of tRNA(Ala). Also edits incorrectly charged Ser-tRNA(Ala) and Gly-tRNA(Ala) via its editing domain. The polypeptide is Alanine--tRNA ligase (Methanocella arvoryzae (strain DSM 22066 / NBRC 105507 / MRE50)).